The sequence spans 113 residues: Large ribosomal subunit protein bL19 (113 aa).

This sequence belongs to the bacterial ribosomal protein bL19 family.

This protein is located at the 30S-50S ribosomal subunit interface and may play a role in the structure and function of the aminoacyl-tRNA binding site. The chain is Large ribosomal subunit protein bL19 from Mycolicibacterium vanbaalenii (strain DSM 7251 / JCM 13017 / BCRC 16820 / KCTC 9966 / NRRL B-24157 / PYR-1) (Mycobacterium vanbaalenii).